A 590-amino-acid polypeptide reads, in one-letter code: 2-hydroxyacyl-CoA lyase (590 aa).

Residues glycine 43, glutamine 128, glutamine 255, 273-274 (RS), and arginine 362 each bind 2-hydroxyisobutanoyl-CoA. Position 410–412 (410–412 (GDL)) interacts with thiamine diphosphate. Arginine 417 is a binding site for 2-hydroxyisobutanoyl-CoA. Glycine 433 contributes to the thiamine diphosphate binding site. Aspartate 460 lines the Mg(2+) pocket. Residues 461–462 (GA) and 487–492 (NRAWNI) each bind thiamine diphosphate. Mg(2+)-binding residues include asparagine 487 and alanine 489. Glutamate 493 functions as the Proton acceptor in the catalytic mechanism. 561 to 564 (DSGK) serves as a coordination point for 2-hydroxyisobutanoyl-CoA. The tract at residues 566-590 (LGFVPDYQALTPWNDAEVARRQEGI) is C-terminal lid.

Belongs to the TPP enzyme family. As to quaternary structure, a homotetramer formed by a dimer of dimers; active sites are located in the dimer interface. Mg(2+) serves as cofactor. It depends on thiamine diphosphate as a cofactor.

It catalyses the reaction 2-hydroxyisobutanoyl-CoA = formyl-CoA + acetone. With respect to regulation, activity is stimulated by thiamine diphosphate. Its function is as follows. A lyase that reversibly degrades 2-hydroxyisobutyryl-CoA (2-HIB-CoA) to acetone and formyl-CoA. Probably also cleaves 2-hydroxy-2-methylbutyryl-CoA to butanone and formyl-CoA. Does not act on 2-hydroxy-2-ethylbutyryl-CoA. A C-terminal lid closes the active site upon substrate binding, and with residues Leu-127 and Ile-492 restricts the size of the active site cavity so it can only use short-chain (C4 and C5) acyl substrates. Part of a pathway that allows cells to grow on 2-methylpropane-1,2-diol or 2-hydroxyisobutyric acid (2-HIBA) as a sole carbon source. In Actinomycetospora chiangmaiensis (strain DSM 45062 / JCM 15998 / CCTCC AA 205017 / NBRC 104400 / YIM 0006), this protein is 2-hydroxyacyl-CoA lyase.